Here is a 311-residue protein sequence, read N- to C-terminus: JNK1/MAPK8-associated membrane protein (311 aa).

Residues 1–57 (MAVDIQPACLGLYCGKTLLFKNGSSEIYGECGVCPRGQRTNAQKYCQPCTESPELYD) lie on the Lumenal side of the membrane. Asparagine 22 carries N-linked (GlcNAc...) asparagine glycosylation. The helical transmembrane segment at 58-78 (WLYLGFMAMLPLVLHWFFIEW) threads the bilayer. Over 79-87 (YSGKKSSSA) the chain is Cytoplasmic. The chain crosses the membrane as a helical span at residues 88 to 108 (LFQHITALFECTMAAIITLLV). The Lumenal portion of the chain corresponds to 109-149 (SDPVGVLYIRSCRVLMLSDWYTMLYNPSPDYVTTVHCTHEA). The chain crosses the membrane as a helical span at residues 150-170 (VYPLYTIVFVYYAFCLVLMML). Topologically, residues 171–188 (LRPLLVKKIACGLGKSDR) are cytoplasmic. Residues 189–209 (FKSIYAALYFFPILTVLQAVG) form a helical membrane-spanning segment. A topological domain (lumenal) is located at residue glycine 210. The chain crosses the membrane as a helical span at residues 211 to 231 (GLLYYAFPYIILVLSLVTLAV). Over 232–250 (YMSASEIENCYDLLVRKKR) the chain is Cytoplasmic. Residues 251-271 (LIVLFSHWLLHAYGIVSISRV) form a helical membrane-spanning segment. Residues 272 to 277 (DRLEHD) are Lumenal-facing. A helical membrane pass occupies residues 278 to 298 (LPLLALVPTPALFYLFTAKFT). Over 299-311 (EPSRILSEGANGH) the chain is Cytoplasmic.

In terms of assembly, interacts with RNF5 and MAPK8, but not with MAPK9. Binding to MAPK8 occurs before and after exposure to stress, such as UV irradiation. After exposure to stress, interacts with phosphorylated MAPK8. Competes with DUSP10 for MAPK8 binding. Associates with multiple components of the proteasome and with ERAD regulatory proteins, including AMFR/GP78, CANX, PSMC1, PSMC2, PSMC3/TBP1, PSMC5, PSMC6, PSMD8, SEC61-ALPHA and UFD1. Post-translationally, ubiquitinated by RNF5 via 'Lys-63'-linked ubiquitin linkage in a UBE2N-dependent manner. Ubiquitination decreases association with components of the proteasome and ERAD. Expressed in numerous tissues, including brain, spleen, thymus, liver, kidney and testis.

It localises to the endoplasmic reticulum membrane. Functionally, regulates the duration of MAPK8 activity in response to various stress stimuli. Facilitates degradation of misfolded endoplasmic reticulum (ER) proteins through the recruitment of components of the proteasome and endoplasmic reticulum-associated degradation (ERAD) system. The sequence is that of JNK1/MAPK8-associated membrane protein (Jkamp) from Mus musculus (Mouse).